A 39-amino-acid chain; its full sequence is Photosystem II reaction center protein J (39 aa).

Residues 7–27 (IPLWIVATVAGTGVLVVVGLF) form a helical membrane-spanning segment.

The protein belongs to the PsbJ family. As to quaternary structure, PSII is composed of 1 copy each of membrane proteins PsbA, PsbB, PsbC, PsbD, PsbE, PsbF, PsbH, PsbI, PsbJ, PsbK, PsbL, PsbM, PsbT, PsbX, PsbY, PsbZ, Psb30/Ycf12, peripheral proteins PsbO, CyanoQ (PsbQ), PsbU, PsbV and a large number of cofactors. It forms dimeric complexes.

The protein localises to the cellular thylakoid membrane. One of the components of the core complex of photosystem II (PSII). PSII is a light-driven water:plastoquinone oxidoreductase that uses light energy to abstract electrons from H(2)O, generating O(2) and a proton gradient subsequently used for ATP formation. It consists of a core antenna complex that captures photons, and an electron transfer chain that converts photonic excitation into a charge separation. The chain is Photosystem II reaction center protein J from Synechococcus elongatus (strain ATCC 33912 / PCC 7942 / FACHB-805) (Anacystis nidulans R2).